Consider the following 361-residue polypeptide: dTDP-glucose 4,6-dehydratase (361 aa).

Residues 11–12 (FI), 32–35 (DKLT), 58–59 (DI), 80–84 (LAAES), and Thr-99 each bind NAD(+). Ser-84 lines the substrate pocket. A substrate-binding site is contributed by Thr-133. The active-site Proton donor is the Asp-134. Residues Glu-135 and Tyr-167 each act as proton acceptor in the active site. 167–171 (YSASK) lines the NAD(+) pocket. A substrate-binding site is contributed by Asn-196. Asn-197 contacts NAD(+). Residues 206-207 (KL), 222-224 (PIY), Arg-231, Asn-266, and 296-300 (DRPGH) each bind substrate.

Belongs to the NAD(P)-dependent epimerase/dehydratase family. dTDP-glucose dehydratase subfamily. In terms of assembly, homodimer. NAD(+) serves as cofactor.

The catalysed reaction is dTDP-alpha-D-glucose = dTDP-4-dehydro-6-deoxy-alpha-D-glucose + H2O. The protein operates within carbohydrate biosynthesis; dTDP-L-rhamnose biosynthesis. It functions in the pathway bacterial outer membrane biogenesis; LPS O-antigen biosynthesis. Its function is as follows. Catalyzes the dehydration of dTDP-D-glucose to form dTDP-6-deoxy-D-xylo-4-hexulose via a three-step process involving oxidation, dehydration and reduction. The protein is dTDP-glucose 4,6-dehydratase (rfbB) of Escherichia coli.